Reading from the N-terminus, the 386-residue chain is Flap endonuclease 1 (386 aa).

The interval 1–104 is N-domain; the sequence is MGILGLSKLI…GELAKRAERR (104 aa). Residue Asp-34 participates in Mg(2+) binding. Arg-47 and Arg-70 together coordinate DNA. Mg(2+) is bound by residues Asp-86, Glu-158, Glu-160, Asp-179, and Asp-181. The I-domain stretch occupies residues 122–253; it reads EIEKFNRRLV…KRAIELINNY (132 aa). Glu-158 is a DNA binding site. Residues Gly-231 and Asp-233 each coordinate DNA. Asp-233 contacts Mg(2+). The tract at residues 336-344 is interaction with PCNA; the sequence is TQVRLDSFF. The tract at residues 351–386 is disordered; sequence PNAVHAAKRKAEEAKKSANNKKAKTSGGAARGRRPK.

Belongs to the XPG/RAD2 endonuclease family. FEN1 subfamily. As to quaternary structure, interacts with PCNA. Three molecules of FEN1 bind to one PCNA trimer with each molecule binding to one PCNA monomer. PCNA stimulates the nuclease activity without altering cleavage specificity. It depends on Mg(2+) as a cofactor. Phosphorylated. Phosphorylation upon DNA damage induces relocalization to the nuclear plasma.

It localises to the nucleus. The protein localises to the nucleolus. The protein resides in the nucleoplasm. Its subcellular location is the mitochondrion. Structure-specific nuclease with 5'-flap endonuclease and 5'-3' exonuclease activities involved in DNA replication and repair. During DNA replication, cleaves the 5'-overhanging flap structure that is generated by displacement synthesis when DNA polymerase encounters the 5'-end of a downstream Okazaki fragment. It enters the flap from the 5'-end and then tracks to cleave the flap base, leaving a nick for ligation. Also involved in the long patch base excision repair (LP-BER) pathway, by cleaving within the apurinic/apyrimidinic (AP) site-terminated flap. Acts as a genome stabilization factor that prevents flaps from equilibrating into structures that lead to duplications and deletions. Also possesses 5'-3' exonuclease activity on nicked or gapped double-stranded DNA, and exhibits RNase H activity. Also involved in replication and repair of rDNA and in repairing mitochondrial DNA. The polypeptide is Flap endonuclease 1 (Drosophila persimilis (Fruit fly)).